A 247-amino-acid polypeptide reads, in one-letter code: Ferredoxin:CoB-CoM heterodisulfide reductase subunit C (247 aa).

Residues Thr32 to Arg62 form the 4Fe-4S ferredoxin-type domain. 8 residues coordinate [4Fe-4S] cluster: Cys41, Cys44, Cys47, Cys51, Cys84, Cys87, Cys90, and Cys94. Basic and acidic residues predominate over residues Arg216–Thr240. Residues Arg216–Val247 are disordered.

This sequence belongs to the HdrC family. As to quaternary structure, the ferredoxin:CoB-CoM heterodisulfide reductase is composed of three subunits; HdrA1, HdrB1 and HdrC1. It depends on [4Fe-4S] cluster as a cofactor.

The protein localises to the cytoplasm. The enzyme catalyses coenzyme B + coenzyme M + 2 oxidized [2Fe-2S]-[ferredoxin] = coenzyme M-coenzyme B heterodisulfide + 2 reduced [2Fe-2S]-[ferredoxin] + 2 H(+). The protein operates within cofactor metabolism; coenzyme M-coenzyme B heterodisulfide reduction; coenzyme B and coenzyme M from coenzyme M-coenzyme B heterodisulfide: step 1/1. Its function is as follows. Part of a complex that catalyzes the reversible reduction of CoM-S-S-CoB to the thiol-coenzymes H-S-CoM (coenzyme M) and H-S-CoB (coenzyme B). Probably involved in methylotrophic methanogenesis but not in aceticlastic methanogenesis. In Methanosarcina acetivorans (strain ATCC 35395 / DSM 2834 / JCM 12185 / C2A), this protein is Ferredoxin:CoB-CoM heterodisulfide reductase subunit C.